Reading from the N-terminus, the 201-residue chain is uncharacterized protein (201 aa).

This is an uncharacterized protein from Saccharomyces cerevisiae (strain ATCC 204508 / S288c) (Baker's yeast).